The primary structure comprises 903 residues: HTH-type transcriptional regulator MalT (903 aa).

39–46 lines the ATP pocket; the sequence is CPAGYGKT. Residues 832-897 form the HTH luxR-type domain; the sequence is ELIRTSPLTQ…EAVQQAQRLL (66 aa). The H-T-H motif DNA-binding region spans 856–875; the sequence is NDQIANELDVAATTIKTHIR.

This sequence belongs to the MalT family. In terms of assembly, monomer in solution. Oligomerizes to an active state in the presence of the positive effectors ATP and maltotriose.

Its activity is regulated as follows. Activated by ATP and maltotriose, which are both required for DNA binding. Functionally, positively regulates the transcription of the maltose regulon whose gene products are responsible for uptake and catabolism of malto-oligosaccharides. Specifically binds to the promoter region of its target genes, recognizing a short DNA motif called the MalT box. The sequence is that of HTH-type transcriptional regulator MalT from Yersinia pseudotuberculosis serotype O:1b (strain IP 31758).